The following is a 509-amino-acid chain: Probable cytochrome P450 4ac1 (509 aa).

Residues Glu-317 and Cys-454 each coordinate heme.

Belongs to the cytochrome P450 family. It depends on heme as a cofactor.

It is found in the endoplasmic reticulum membrane. The protein resides in the microsome membrane. Functionally, may be involved in the metabolism of insect hormones and in the breakdown of synthetic insecticides. The chain is Probable cytochrome P450 4ac1 (Cyp4ac1) from Drosophila melanogaster (Fruit fly).